The sequence spans 155 residues: Anaerobic ribonucleoside-triphosphate reductase-activating protein (155 aa).

[4Fe-4S] cluster contacts are provided by Cys-26, Cys-30, and Cys-33. Residues 32–34 (GCY) and Gly-74 contribute to the S-adenosyl-L-methionine site.

The protein belongs to the organic radical-activating enzymes family. As to quaternary structure, forms a tetramer composed of two NrdD and two NrdG subunits. [4Fe-4S] cluster serves as cofactor.

It localises to the cytoplasm. The catalysed reaction is glycyl-[protein] + reduced [flavodoxin] + S-adenosyl-L-methionine = glycin-2-yl radical-[protein] + semiquinone [flavodoxin] + 5'-deoxyadenosine + L-methionine + H(+). In terms of biological role, activation of anaerobic ribonucleoside-triphosphate reductase under anaerobic conditions by generation of an organic free radical, using S-adenosylmethionine and reduced flavodoxin as cosubstrates to produce 5'-deoxy-adenosine. This is Anaerobic ribonucleoside-triphosphate reductase-activating protein (nrdG) from Vibrio cholerae serotype O1 (strain ATCC 39315 / El Tor Inaba N16961).